The sequence spans 27 residues: Secretin (27 aa).

Position 27 is a leucine amide (L27).

This sequence belongs to the glucagon family.

It localises to the secreted. Hormone involved in different processes, such as regulation of the pH of the duodenal content, food intake and water homeostasis. Exerts its biological effects by binding to secretin receptor (SCTR), a G-protein coupled receptor expressed in the basolateral domain of several cells. Acts as a key gastrointestinal hormone by regulating the pH of the duodenal content. Secreted by S cells of the duodenum in the crypts of Lieberkuehn and regulates the pH of the duodenum by (1) inhibiting the secretion of gastric acid from the parietal cells of the stomach and (2) stimulating the production of bicarbonate (NaHCO(3)) from the ductal cells of the pancreas. Production of bicarbonate is essential to neutralize the pH and ensure no damage is done to the small intestine by the gastric acid. In addition to regulating the pH of the duodenal content, plays a central role in diet induced thermogenesis: acts as a non-sympathetic brown fat (BAT) activator mediating prandial thermogenesis, which consequentially induces satiation. Mechanistically, secretin released by the gut after a meal binds to secretin receptor (SCTR) in brown adipocytes, activating brown fat thermogenesis by stimulating lipolysis, which is sensed in the brain and promotes satiation. Also able to stimulate lipolysis in white adipocytes. Also plays an important role in cellular osmoregulation: released into the systemic circulation in response to hyperosmolality and acts at different levels in the hypothalamus, pituitary and kidney to regulate water homeostasis. Also plays a role in the central nervous system, possibly by acting as a neuropeptide hormone: required for hippocampal synaptic function and neural progenitor cells maintenance. This Oryctolagus cuniculus (Rabbit) protein is Secretin.